We begin with the raw amino-acid sequence, 352 residues long: Protein RecA (352 aa).

Gly-65–Thr-72 serves as a coordination point for ATP. The tract at residues Val-333–Ile-352 is disordered. Over residues Glu-343–Ile-352 the composition is skewed to acidic residues.

This sequence belongs to the RecA family.

The protein resides in the cytoplasm. Functionally, can catalyze the hydrolysis of ATP in the presence of single-stranded DNA, the ATP-dependent uptake of single-stranded DNA by duplex DNA, and the ATP-dependent hybridization of homologous single-stranded DNAs. It interacts with LexA causing its activation and leading to its autocatalytic cleavage. The protein is Protein RecA of Pseudomonas fluorescens.